A 346-amino-acid polypeptide reads, in one-letter code: Biotin synthase (346 aa).

A Radical SAM core domain is found at 38-256; that stretch reads QQVQVSTLLS…IAVARIMMPT (219 aa). [4Fe-4S] cluster contacts are provided by C53, C57, and C60. Positions 97, 128, 188, and 260 each coordinate [2Fe-2S] cluster.

Belongs to the radical SAM superfamily. Biotin synthase family. Homodimer. The cofactor is [4Fe-4S] cluster. Requires [2Fe-2S] cluster as cofactor.

The enzyme catalyses (4R,5S)-dethiobiotin + (sulfur carrier)-SH + 2 reduced [2Fe-2S]-[ferredoxin] + 2 S-adenosyl-L-methionine = (sulfur carrier)-H + biotin + 2 5'-deoxyadenosine + 2 L-methionine + 2 oxidized [2Fe-2S]-[ferredoxin]. It participates in cofactor biosynthesis; biotin biosynthesis; biotin from 7,8-diaminononanoate: step 2/2. Catalyzes the conversion of dethiobiotin (DTB) to biotin by the insertion of a sulfur atom into dethiobiotin via a radical-based mechanism. This chain is Biotin synthase, found in Salmonella dublin (strain CT_02021853).